A 51-amino-acid polypeptide reads, in one-letter code: MRDKIKLVSTAGTGYYYTTTKNKRTMPGKMEIKKFDPKVRQHVIFKEAKIK.

It belongs to the bacterial ribosomal protein bL33 family.

The sequence is that of Large ribosomal subunit protein bL33 from Psychrobacter arcticus (strain DSM 17307 / VKM B-2377 / 273-4).